Reading from the N-terminus, the 314-residue chain is Replication-associated protein A (314 aa).

Positions 17–120 (KHRNVNTFLT…PVTYWERGTF (104 aa)) constitute a CRESS-DNA virus Rep endonuclease domain. The RCR-1 signature appears at 24 to 27 (FLTY). Glutamate 58, histidine 66, and histidine 68 together coordinate a divalent metal cation. An RCR-2 motif is present at residues 66–68 (HIH). The active-site For DNA cleavage activity is tyrosine 106. The short motif at 106 to 109 (YAMK) is the RCR-3 element. A divalent metal cation is bound at residue asparagine 110. The tract at residues 180–192 (SANKLFPDIQEIY) is oligomerization. Polar residues predominate over residues 255 to 269 (TGSSACTSSGQQEQA). The segment at 255–314 (TGSSACTSSGQQEQASPPGPGAWEDIITGRTTSTGPPTTRTQNTTSSTTYPSSTVHAGSN) is disordered. Positions 282 to 308 (TGRTTSTGPPTTRTQNTTSSTTYPSST) are enriched in low complexity.

It belongs to the geminiviridae Rep protein family. Homooligomer. Part of the C- and V-complexes which are RepA-Rep-DNA complexes involved in the c-sense and v-sense transcription. The cofactor is Mg(2+). Mn(2+) is required as a cofactor.

It is found in the host nucleus. The protein resides in the host cytoplasm. Functionally, implicated in enhancement of V-sense gene expression. Acts a an inhibitor of C-sense gene transcription. The polypeptide is Replication-associated protein A (Cenchrus echinatus (Sugarcane)).